A 787-amino-acid chain; its full sequence is uncharacterized protein (787 aa).

Residue Met-1 is modified to N-acetylmethionine. Disordered regions lie at residues 1–115 (MFDG…NDHK), 130–200 (TNPF…QRSE), and 217–238 (VSSG…ASQD). The segment covering 36-54 (VPSTIKKSTNIARTSTAET) has biased composition (polar residues). Ser-63 carries the phosphoserine modification. Positions 130 to 142 (TNPFTTSANSNAH) are enriched in polar residues. A compositionally biased stretch (low complexity) spans 160 to 169 (SITTSISNNT). Over residues 170–184 (TKEEIESNNDSERDS) the composition is skewed to basic and acidic residues. A compositionally biased stretch (low complexity) spans 218–230 (SSGSSLSLDTSEN). Phosphoserine occurs at positions 254, 313, 342, 345, 390, 477, 492, 546, 683, and 699.

It localises to the cytoplasm. This is an uncharacterized protein from Saccharomyces cerevisiae (strain ATCC 204508 / S288c) (Baker's yeast).